We begin with the raw amino-acid sequence, 195 residues long: Shikimate kinase (195 aa).

ATP is bound at residue 30–35 (GAGKTA). Mg(2+) is bound at residue threonine 34. Aspartate 52, arginine 76, and glycine 98 together coordinate substrate. Arginine 136 contacts ATP. Position 155 (arginine 155) interacts with substrate.

This sequence belongs to the shikimate kinase family. As to quaternary structure, monomer. Mg(2+) serves as cofactor.

It localises to the cytoplasm. It carries out the reaction shikimate + ATP = 3-phosphoshikimate + ADP + H(+). It functions in the pathway metabolic intermediate biosynthesis; chorismate biosynthesis; chorismate from D-erythrose 4-phosphate and phosphoenolpyruvate: step 5/7. Catalyzes the specific phosphorylation of the 3-hydroxyl group of shikimic acid using ATP as a cosubstrate. In Ruegeria pomeroyi (strain ATCC 700808 / DSM 15171 / DSS-3) (Silicibacter pomeroyi), this protein is Shikimate kinase.